A 944-amino-acid polypeptide reads, in one-letter code: Leucine--tRNA ligase (944 aa).

Residues 40–51 carry the 'HIGH' region motif; that stretch reads PYPSGAGLHVGH. A 'KMSKS' region motif is present at residues 718 to 722; the sequence is KMSKS. K721 provides a ligand contact to ATP.

It belongs to the class-I aminoacyl-tRNA synthetase family.

It is found in the cytoplasm. It catalyses the reaction tRNA(Leu) + L-leucine + ATP = L-leucyl-tRNA(Leu) + AMP + diphosphate. This Bacteroides thetaiotaomicron (strain ATCC 29148 / DSM 2079 / JCM 5827 / CCUG 10774 / NCTC 10582 / VPI-5482 / E50) protein is Leucine--tRNA ligase.